Here is a 581-residue protein sequence, read N- to C-terminus: Semenogelin-2 (581 aa).

The first 23 residues, 1–23, serve as a signal peptide directing secretion; the sequence is MKSIILFVLSLLLILEKQAAVMG. 4 disordered regions span residues 24 to 62, 132 to 157, 173 to 194, and 271 to 581; these read QKGG…SKGS, GGKA…GISS, KEQA…QSSY, and NLNQ…PIST. Polar residues-rich tracts occupy residues 138-157 and 174-194; these read GTQN…GISS and EQAS…QSSY. The segment covering 291–310 has biased composition (basic and acidic residues); it reads HTEERQLNHGEKSVQKDISK. The span at 324–333 shows a compositional bias: polar residues; it reads KSQNQVTIHS. Basic and acidic residues predominate over residues 334-344; it reads QDQEHGHKENK. The span at 366-396 shows a compositional bias: polar residues; the sequence is KSVSKGSISIQTEEQIHGKSQNQVRIPSQAQ. Composition is skewed to basic and acidic residues over residues 412–425 and 455–464; these read TEER…KDIQ and DQEHGHKENK. 2 stretches are compositionally biased toward polar residues: residues 481 to 497 and 505 to 529; these read GKNT…SFQT and SQIQ…SGQS. 2 stretches are compositionally biased toward basic and acidic residues: residues 530 to 545 and 558 to 581; these read ADRE…KGRY and TEHE…PIST.

Belongs to the semenogelin family. Interacts with SERPINA5.

The protein resides in the secreted. Participates in the formation of a gel matrix (sperm coagulum) entrapping the accessory gland secretions and ejaculated spermatozoa. This chain is Semenogelin-2 (SEMG2), found in Pongo abelii (Sumatran orangutan).